Here is a 267-residue protein sequence, read N- to C-terminus: Mannose-specific lectin 1 (267 aa).

Residues 1–24 (MAKSLVLSSLLLALLLAAPLASLA) form the signal peptide. 2 Bulb-type lectin domains span residues 26 to 136 (NNVL…APNR) and 150 to 260 (RNVL…SPAR). 2 cysteine pairs are disulfide-bonded: Cys-54-Cys-76 and Cys-178-Cys-203.

As to quaternary structure, heterotetramer of 2 domain 1 and 2 domain 2 chains arranged as a dimer of domain 1/domain 2 heterodimers.

In terms of biological role, mannose-specific lectin. Has weak agglutinating activity towards trypsin-treated erythrocytes from rabbit but not from human. The polypeptide is Mannose-specific lectin 1 (Crocus vernus (Dutch crocus)).